Reading from the N-terminus, the 313-residue chain is Porphobilinogen deaminase (313 aa).

An S-(dipyrrolylmethanemethyl)cysteine modification is found at Cys-241.

The protein belongs to the HMBS family. In terms of assembly, monomer. The cofactor is dipyrromethane.

The enzyme catalyses 4 porphobilinogen + H2O = hydroxymethylbilane + 4 NH4(+). The protein operates within porphyrin-containing compound metabolism; protoporphyrin-IX biosynthesis; coproporphyrinogen-III from 5-aminolevulinate: step 2/4. It functions in the pathway porphyrin-containing compound metabolism; chlorophyll biosynthesis. Its function is as follows. Tetrapolymerization of the monopyrrole PBG into the hydroxymethylbilane pre-uroporphyrinogen in several discrete steps. The sequence is that of Porphobilinogen deaminase from Chlorobium phaeobacteroides (strain BS1).